The chain runs to 498 residues: Glycerol kinase (498 aa).

T12 is a binding site for ADP. Positions 12, 13, and 14 each coordinate ATP. T12 serves as a coordination point for sn-glycerol 3-phosphate. R16 contacts ADP. Residues R82, E83, Y134, and D244 each contribute to the sn-glycerol 3-phosphate site. Residues R82, E83, Y134, D244, and Q245 each contribute to the glycerol site. Residues T266 and G309 each coordinate ADP. T266, G309, Q313, and G410 together coordinate ATP. ADP contacts are provided by G410 and N414.

Belongs to the FGGY kinase family. As to quaternary structure, homotetramer and homodimer (in equilibrium).

It catalyses the reaction glycerol + ATP = sn-glycerol 3-phosphate + ADP + H(+). The protein operates within polyol metabolism; glycerol degradation via glycerol kinase pathway; sn-glycerol 3-phosphate from glycerol: step 1/1. Its activity is regulated as follows. Activated by phosphorylation and inhibited by fructose 1,6-bisphosphate (FBP). In terms of biological role, key enzyme in the regulation of glycerol uptake and metabolism. Catalyzes the phosphorylation of glycerol to yield sn-glycerol 3-phosphate. The chain is Glycerol kinase from Natranaerobius thermophilus (strain ATCC BAA-1301 / DSM 18059 / JW/NM-WN-LF).